The chain runs to 1649 residues: DNA-directed RNA polymerase subunit beta' (1649 aa).

Zn(2+) contacts are provided by Cys-62, Cys-64, Cys-77, and Cys-80. Residues Asp-746, Asp-748, and Asp-750 each coordinate Mg(2+). Zn(2+)-binding residues include Cys-1077, Cys-1268, Cys-1275, and Cys-1278.

Belongs to the RNA polymerase beta' chain family. The RNAP catalytic core consists of 2 alpha, 1 beta, 1 beta' and 1 omega subunit. When a sigma factor is associated with the core the holoenzyme is formed, which can initiate transcription. Mg(2+) serves as cofactor. Zn(2+) is required as a cofactor.

It catalyses the reaction RNA(n) + a ribonucleoside 5'-triphosphate = RNA(n+1) + diphosphate. In terms of biological role, DNA-dependent RNA polymerase catalyzes the transcription of DNA into RNA using the four ribonucleoside triphosphates as substrates. The chain is DNA-directed RNA polymerase subunit beta' from Thermosipho africanus (strain TCF52B).